The sequence spans 469 residues: tRNA (cytosine(72)-C(5))-methyltransferase NSUN6 (469 aa).

The region spanning 111 to 203 (QCEAIVGAQC…MGIRMTEPVY (93 aa)) is the PUA domain. Residues 242 to 248 (CAAPGGK), Asp266, Asp293, and Asp323 contribute to the S-adenosyl-L-methionine site. Cys373 acts as the Nucleophile in catalysis. The residue at position 419 (Lys419) is an N6-acetyllysine.

It belongs to the class I-like SAM-binding methyltransferase superfamily. RsmB/NOP family.

It localises to the cytoplasm. The catalysed reaction is cytidine(72) in tRNA(Thr) + S-adenosyl-L-methionine = 5-methylcytidine(72) in tRNA(Thr) + S-adenosyl-L-homocysteine + H(+). It catalyses the reaction cytidine(72) in tRNA(Cys) + S-adenosyl-L-methionine = 5-methylcytidine(72) in tRNA(Cys) + S-adenosyl-L-homocysteine + H(+). S-adenosyl-L-methionine-dependent methyltransferase that specifically methylates the C5 position of cytosine 72 in tRNA(Thr)(TGT) and tRNA(Cys)(GCA). In vitro also methylates tRNA(Thr)(AGT). Methylation requires, in the acceptor stem region, the presence of the 3'-CCA terminus, the target site C72, the discriminator base U73, and the second and third base pairs (2:71 and 3:70) in the tRNA substrates. The protein is tRNA (cytosine(72)-C(5))-methyltransferase NSUN6 of Homo sapiens (Human).